Here is a 471-residue protein sequence, read N- to C-terminus: Protein hedgehog (471 aa).

Cysteine 85 is lipidated: N-palmitoyl cysteine. Ca(2+)-binding residues include glutamate 149, glutamate 150, aspartate 155, threonine 185, glutamate 186, aspartate 189, and aspartate 191. The Cholesterol glycine ester moiety is linked to residue glycine 257.

This sequence belongs to the hedgehog family. Interacts with shf. Interacts with ptc and CG5504/l(2)tid. The C-terminal part of the hedgehog protein precursor displays an autoproteolysis activity that results in the cleavage of the full-length protein into two parts (N-product and C-product). In addition, the C-terminal part displays a cholesterol transferase activity that results by the covalent attachment of a cholesterol moiety to the C-terminal of the newly generated N-product. The N-product is the active species in both local and long-range signaling, whereas the C-product has no signaling activity. Post-translationally, cholesterylation is required for N-product targeting to lipid rafts and multimerization. In terms of processing, N-palmitoylation by Rasp of the hedgehog N-product, within the secretory pathway, is required for the embryonic and larval patterning activities of the hedgehog signal. In embryos, expression starts at stage 5 as a few stripes at the anterior and posterior ends, this expands to 17 stripes during stages 8-11. Expression is also seen in CNS and some PNS cells until stage 13-14, and in foregut, hindgut and salivary glands. In larvae, expression is seen in the posterior compartment of the wing, leg and antennal imaginal disks. In adults, high level of expression in specific regions of the proventriculus and hindgut, with slightly lower levels of expression in the posterior midgut. Relatively low levels of expression in the anterior midgut region.

The protein resides in the nucleus. The protein localises to the cytoplasm. It is found in the cell membrane. It catalyses the reaction glycyl-L-cysteinyl-[protein] + cholesterol + H(+) = [protein]-C-terminal glycyl cholesterol ester + N-terminal L-cysteinyl-[protein]. The C-terminal part of the hedgehog protein precursor displays an autoproteolysis activity that results in the cleavage of the full-length protein into two parts (N-product and C-product). In addition, the C-terminal part displays a cholesterol transferase activity that results by the covalent attachment of a cholesterol moiety to the C-terminal of the newly generated N-product. Once cleaved, the C-product has no signaling activity and diffuses from the cell. In terms of biological role, the dually lipidated hedgehog protein N-product is a morphogen which is essential for a variety of patterning events during development. Establishes the anterior-posterior axis of the embryonic segments and patterns the larval imaginal disks. Binds to the patched (ptc) receptor, which functions in association with smoothened (smo), to activate the transcription of target genes wingless (wg), decapentaplegic (dpp) and ptc. In the absence of hh, ptc represses the constitutive signaling activity of smo through fused (fu). Essential component of a signaling pathway which regulates the Duox-dependent gut immune response to bacterial uracil; required to activate Cad99C-dependent endosome formation, norpA-dependent Ca2+ mobilization and p38 MAPK, which are essential steps in the Duox-dependent production of reactive oxygen species (ROS) in response to intestinal bacterial infection. During photoreceptor differentiation, it up-regulates transcription of Ubr3, which in turn promotes the hh-signaling pathway by mediating the ubiquitination and degradation of cos. The chain is Protein hedgehog from Drosophila melanogaster (Fruit fly).